The chain runs to 706 residues: MSAIKKTFTYGRHQVTLETGEIARQASGAVVVNMDDTMVLVTVVAKNEVKPGQDFFPLTVDYQEKTYAAGRIPGGFLKRESRPSEGETLISRLIDRPIRPLFPEGFFNEVQIIATVMSSNPEVSADIPALIGASAALSLSGLPFDGPVGAARVGFINGEYVLNPTNAELKDSALDLVVAGTESAVLMVESEAMELPEDIMLGAVVFGHTQMQAAINAINELADEAGADAWDWAPPAEDTAMVDRLKALAEDGLQQAYNIKQKRARMAAVDEVRSKAFAELITADMDTVAANHVKDAFHRLEAGVVRNRILSGQPRIDGRDTRTVRPITIRTGVLPRAHGSALFTRGETQALVVTTLGTGRDEQTIDALEGSYSDRFMLHYNMPPYATGETGRVGSPKRREIGHGRLAKRALLAVLPSKEEFGYTMRVVSEITESNGSSSMASVCGGCLSLMDAGAPLKAHVAGIAMGLIKEGNRFAVLTDILGDEDHLGDMDFKVAGTENGVTALQMDIKITGITKEIMQAALTQAKEGRMHILGIMKASVSETHEMSAYAPRIIAMKINPEKIRDVIGKGGAVIRALTEETGTQIDIQEDGSVKIACTSMEAGELAKKRIEEITAEVEVGKVYEGPVIKLLDFGAIVNVLPGRDGLLHISQIAHERVNTIGDYLKEGQVVRVKILEADEKGRLRLSMKALLEAPAPTSGGEEHAS.

D486 and D492 together coordinate Mg(2+). The KH domain maps to 552 to 611; that stretch reads PRIIAMKINPEKIRDVIGKGGAVIRALTEETGTQIDIQEDGSVKIACTSMEAGELAKKRI. Residues 621-689 enclose the S1 motif domain; that stretch reads GKVYEGPVIK…EKGRLRLSMK (69 aa).

It belongs to the polyribonucleotide nucleotidyltransferase family. Requires Mg(2+) as cofactor.

The protein resides in the cytoplasm. It carries out the reaction RNA(n+1) + phosphate = RNA(n) + a ribonucleoside 5'-diphosphate. Involved in mRNA degradation. Catalyzes the phosphorolysis of single-stranded polyribonucleotides processively in the 3'- to 5'-direction. This Thiobacillus denitrificans (strain ATCC 25259 / T1) protein is Polyribonucleotide nucleotidyltransferase.